Reading from the N-terminus, the 790-residue chain is von Willebrand factor A domain-containing protein 2 (790 aa).

The signal sequence occupies residues 1-22 (MRLPWVNGILAFLSSQVLQCLC). The VWFA 1 domain maps to 50 to 221 (DILILLDGSN…DAVNGLATSL (172 aa)). The EGF-like 1 domain maps to 295 to 332 (PDPCDSQPCKNGGTCIAEGQDKYHCVCPAGFGGDTECA). 3 disulfide bridges follow: cysteine 298/cysteine 309, cysteine 303/cysteine 319, and cysteine 321/cysteine 331. VWFA domains follow at residues 342 to 518 (DLLF…QKRI) and 532 to 702 (DLAF…EDSV). Residues 713 to 748 (PVNLCKPNPCMNDGVCILRQGSYRCDCRGWDGPHCE) form the EGF-like 2 domain. 3 disulfides stabilise this stretch: cysteine 717/cysteine 728, cysteine 722/cysteine 737, and cysteine 739/cysteine 747. The interval 758–790 (WPQGLHSRSRQQRHSRKRRLKSVSGSRSSRKKP) is disordered. Residues 764–778 (SRSRQQRHSRKRRLK) show a composition bias toward basic residues.

As to quaternary structure, forms monomers and multimers.

Its subcellular location is the secreted. This chain is von Willebrand factor A domain-containing protein 2 (vwa2), found in Xenopus laevis (African clawed frog).